We begin with the raw amino-acid sequence, 1364 residues long: Formin-like protein 6 (1364 aa).

The Phosphatase tensin-type domain occupies 9–193 (YRKPPDGLLE…HYISRRNVSA (185 aa)). Cys126 serves as the catalytic Phosphocysteine intermediate. In terms of domain architecture, C2 tensin-type spans 199-338 (DRALTLDCVI…FRAEVLFSEM (140 aa)). Disordered stretches follow at residues 614-934 (KCTP…NLKP), 976-999 (VLPS…KPEK), and 1317-1364 (EAEA…ASAK). Residues 617 to 631 (PSPPPLLPPLAPVVP) show a composition bias toward pro residues. Polar residues predominate over residues 657–690 (SFPSLSPTQQKQSTSKLCQTILPTNHQLSSSNIT). Over residues 734–743 (PPAPPPPPLQ) the composition is skewed to pro residues. Positions 744–757 (SPSTPRCSPVRTLA) are enriched in low complexity. 2 stretches are compositionally biased toward pro residues: residues 774–813 (GPPP…PAAP) and 856–865 (PSPPPPPPPC). A compositionally biased stretch (polar residues) spans 916–929 (MSRSLQSGQAASRR). The 401-residue stretch at 922 to 1322 (SGQAASRRSN…KALKEAEAEK (401 aa)) folds into the FH2 domain. Residues 1317-1351 (EAEAEKTKKEPENAQKTKEPGNDKAKHNNSIKELD) show a composition bias toward basic and acidic residues. Residues 1353–1364 (SLQSPAQTASAK) show a composition bias toward polar residues.

The protein belongs to the formin-like family. Class-II subfamily.

The polypeptide is Formin-like protein 6 (FH6) (Oryza sativa subsp. japonica (Rice)).